Here is a 331-residue protein sequence, read N- to C-terminus: DNA-directed RNA polymerase subunit alpha (331 aa).

The interval 1–226 (MLIAQRPTLT…ELFGLARELN (226 aa)) is alpha N-terminal domain (alpha-NTD). Residues 243 to 331 (LSSELSMPIE…SYDEDETTTN (89 aa)) are alpha C-terminal domain (alpha-CTD).

The protein belongs to the RNA polymerase alpha chain family. In terms of assembly, homodimer. The RNAP catalytic core consists of 2 alpha, 1 beta, 1 beta' and 1 omega subunit. When a sigma factor is associated with the core the holoenzyme is formed, which can initiate transcription.

The catalysed reaction is RNA(n) + a ribonucleoside 5'-triphosphate = RNA(n+1) + diphosphate. Its function is as follows. DNA-dependent RNA polymerase catalyzes the transcription of DNA into RNA using the four ribonucleoside triphosphates as substrates. In Clavibacter sepedonicus (Clavibacter michiganensis subsp. sepedonicus), this protein is DNA-directed RNA polymerase subunit alpha.